The following is a 206-amino-acid chain: MENVRREATRPSVPSGTLELYFPDHLYRNDYVSLEGPRWAPAIKQAVRWKFTPMGRDAAGQVWFTGLTNSEPGDAWYKLPRALDTPYREAHTRWHGCFQSRQRGLPPAYTQHLREMAFWDPAITAQYLNSGPRWGCMQWRDRQIRGKEFVVTRNQFGAKLPWRSDYVPLLSLPQRPRFTAQDFRQRGLQRPCPAIGQPPPAFTPAL.

As to quaternary structure, microtubule inner protein component of sperm flagellar doublet microtubules.

The protein resides in the cytoplasm. The protein localises to the cytoskeleton. It localises to the cilium axoneme. It is found in the flagellum axoneme. Its function is as follows. Microtubule inner protein (MIP) part of the dynein-decorated doublet microtubules (DMTs) in cilia axoneme, which is required for motile cilia beating. Located at the center of the tektin bundle where may function to recruit tektins or stabilize the bundle. This is Tektin bundle-interacting protein 1 from Mus musculus (Mouse).